Here is a 204-residue protein sequence, read N- to C-terminus: Protein GET1 (204 aa).

The Lumenal portion of the chain corresponds to 1-4 (MPSL). A helical membrane pass occupies residues 5–24 (LLIIFVTELVVQLVNTLGAT). Residues 25–110 (TINDLLWRIY…KFDRTLTTTR (86 aa)) are Cytoplasmic-facing. The stretch at 72–107 (AKWAKLRRQHDKLLEDLEKKKASLEAARTKFDRTLT) forms a coiled coil. The helical transmembrane segment at 111–131 (TVSTRSVQWFLPFWYSKEPMF) threads the bilayer. The Lumenal segment spans residues 132 to 155 (WLPYGWFPYYVEWFASFPRAPMGS). A helical transmembrane segment spans residues 156-172 (VSIVVWQWACTAVIALM). Residues 173-204 (IEAATAALVYVAAKQSQKIRQPVPAQSEKKDS) are Cytoplasmic-facing.

Belongs to the WRB/GET1 family. In terms of assembly, interacts with GET3.

Its subcellular location is the endoplasmic reticulum membrane. Its function is as follows. Required for the post-translational delivery of tail-anchored (TA) proteins to the endoplasmic reticulum. Acts as a membrane receptor for soluble GET3, which recognizes and selectively binds the transmembrane domain of TA proteins in the cytosol. This is Protein GET1 from Podospora anserina (strain S / ATCC MYA-4624 / DSM 980 / FGSC 10383) (Pleurage anserina).